Consider the following 832-residue polypeptide: AP-1 complex subunit gamma-1 (832 aa).

In terms of domain architecture, GAE spans 733–832 (LNVYASLLSA…QFDHKFDETL (100 aa)).

Adapter protein complex 1 (AP-1) is a heterotetramer composed of two large adaptins (gamma-type subunit APL4 and beta-type subunit APL2), a medium adaptin (mu-type subunit APM1) and a small adaptin (sigma-type subunit APS1). AP-1 interacts with clathrin. Also a component of the AP-1R complex composed of at least APM2, APL4 and APS1.

It is found in the cytoplasm. Its subcellular location is the golgi apparatus membrane. The protein resides in the cytoplasmic vesicle. It localises to the clathrin-coated vesicle membrane. Functionally, adaptins are components of the adapter complexes which link clathrin to receptors in coated vesicles. Clathrin-associated protein complexes are believed to interact with the cytoplasmic tails of membrane proteins, leading to their selection and concentration. The AP-1 complex interacts directly with clathrin. Component of the AP-1-related (AP-1R) complex, an adapter protein complex that mediates sorting of cargo SNARE SNC1. In contrast to the APM1-containing AP-1 complex, AP-1R is incapable of sorting CHS3. This is AP-1 complex subunit gamma-1 (APL4) from Saccharomyces cerevisiae (strain ATCC 204508 / S288c) (Baker's yeast).